We begin with the raw amino-acid sequence, 311 residues long: Malate dehydrogenase (311 aa).

NAD(+) contacts are provided by residues 7-13 (GAAGGIG) and Asp-34. Substrate-binding residues include Arg-81 and Arg-87. Residues Asn-94 and 117 to 119 (ITN) contribute to the NAD(+) site. Asn-119 and Arg-153 together coordinate substrate. His-177 acts as the Proton acceptor in catalysis. Met-227 provides a ligand contact to NAD(+).

The protein belongs to the LDH/MDH superfamily. MDH type 1 family. As to quaternary structure, homodimer.

It carries out the reaction (S)-malate + NAD(+) = oxaloacetate + NADH + H(+). Its function is as follows. Catalyzes the reversible oxidation of malate to oxaloacetate. This is Malate dehydrogenase from Shewanella piezotolerans (strain WP3 / JCM 13877).